We begin with the raw amino-acid sequence, 366 residues long: Eukaryotic translation initiation factor 3 subunit H (366 aa).

The 150-residue stretch at 12 to 161 (VKVEALVVMK…LRAFRLSPKF (150 aa)) folds into the MPN domain.

Belongs to the eIF-3 subunit H family. Component of the eukaryotic translation initiation factor 3 (eIF-3) complex.

It localises to the cytoplasm. Component of the eukaryotic translation initiation factor 3 (eIF-3) complex, which is involved in protein synthesis of a specialized repertoire of mRNAs and, together with other initiation factors, stimulates binding of mRNA and methionyl-tRNAi to the 40S ribosome. The eIF-3 complex specifically targets and initiates translation of a subset of mRNAs involved in cell proliferation. This is Eukaryotic translation initiation factor 3 subunit H from Emericella nidulans (strain FGSC A4 / ATCC 38163 / CBS 112.46 / NRRL 194 / M139) (Aspergillus nidulans).